The following is a 575-amino-acid chain: Acyloxyacyl hydrolase (575 aa).

The signal sequence occupies residues 1 to 23 (MQSPWKILTVAPLFLLLSLQSSA). A propeptide spanning residues 24 to 34 (SPANDDQSRPS) is cleaved from the precursor. The Saposin B-type domain maps to 37-118 (NGHTCVGCVL…HTLEFCKQNT (82 aa)). The interval 38-70 (GHTCVGCVLVVSVIEQLAQVHNSTVQASMERLC) is important for enzyme activity, localization to cytoplasmic vesicles, and protein stability. 8 disulfides stabilise this stretch: Cys41/Cys114, Cys44/Cys108, Cys70/Cys83, Cys123/Cys453, Cys160/Cys169, Cys206/Cys230, Cys249/Cys329, and Cys376/Cys459. The N-linked (GlcNAc...) asparagine glycan is linked to Asn59. The lipopolysaccharide binding stretch occupies residues 173 to 177 (KLAME). Asp184, Asp186, Asp188, Tyr190, Asp205, Asn207, Asp208, Asp210, Val213, Asp223, Asp227, Asn229, Asn231, Ile233, and Glu245 together coordinate Ca(2+). A glycan (N-linked (GlcNAc...) asparagine) is linked at Asn207. Residue Ser263 is part of the active site. N-linked (GlcNAc...) asparagine glycans are attached at residues Asn409 and Asn466.

Heterodimer of the large and small subunits; disulfide-linked. It depends on Ca(2+) as a cofactor. Post-translationally, cleaved into a large and a small subunit. The small subunit is N-glycosylated.

The protein localises to the secreted. It is found in the cytoplasmic vesicle. The enzyme catalyses a 3-(acyloxy)acyl derivative of bacterial toxin + H2O = a 3-hydroxyacyl derivative of bacterial toxin + a fatty acid + H(+). With respect to regulation, inhibited by EDTA. Removes the secondary (acyloxyacyl-linked) fatty acyl chains from the lipid A region of bacterial lipopolysaccharides. By breaking down LPS, terminates the host response to bacterial infection and prevents prolonged and damaging inflammatory responses. In peritoneal macrophages, seems to be important for recovery from a state of immune tolerance following infection by Gram-negative bacteria. This is Acyloxyacyl hydrolase from Homo sapiens (Human).